Here is a 249-residue protein sequence, read N- to C-terminus: Small ribosomal subunit protein eS6 (249 aa).

Disordered regions lie at residues 161–181 (PLAKEGKKPRTKAPKIQRLVT) and 194–249 (LKKQ…SSQK). Residues 216–229 (RSKEAKEKRQEQIA) show a composition bias toward basic and acidic residues. 5 positions are modified to phosphoserine: Ser-235, Ser-236, Ser-240, Ser-244, and Ser-247. The span at 236–249 (SLRASTSKSESSQK) shows a compositional bias: low complexity.

It belongs to the eukaryotic ribosomal protein eS6 family. Component of the small ribosomal subunit. Part of the small subunit (SSU) processome, composed of more than 70 proteins and the RNA chaperone small nucleolar RNA (snoRNA) U3. In terms of processing, ribosomal protein S6 is the major substrate of protein kinases in eukaryote ribosomes. The phosphorylation is stimulated by growth factors, tumor promoting agents, and mitogens. It is dephosphorylated at growth arrest.

It is found in the cytoplasm. The protein resides in the nucleus. It localises to the nucleolus. Functionally, component of the 40S small ribosomal subunit. Plays an important role in controlling cell growth and proliferation through the selective translation of particular classes of mRNA. Part of the small subunit (SSU) processome, first precursor of the small eukaryotic ribosomal subunit. During the assembly of the SSU processome in the nucleolus, many ribosome biogenesis factors, an RNA chaperone and ribosomal proteins associate with the nascent pre-rRNA and work in concert to generate RNA folding, modifications, rearrangements and cleavage as well as targeted degradation of pre-ribosomal RNA by the RNA exosome. This Xenopus laevis (African clawed frog) protein is Small ribosomal subunit protein eS6 (rps6).